The primary structure comprises 317 residues: Putative HTH-type transcriptional regulatory protein TGAM_1316 (317 aa).

In terms of domain architecture, HTH cro/C1-type spans 131-189 (LKKLREKHGYSVGELASLLGVSRKSLLNYERNEQAVSLEVALRMEELFDEPIAEPIDVL). Positions 142–161 (VGELASLLGVSRKSLLNYER) form a DNA-binding region, H-T-H motif.

The protein is Putative HTH-type transcriptional regulatory protein TGAM_1316 of Thermococcus gammatolerans (strain DSM 15229 / JCM 11827 / EJ3).